The chain runs to 389 residues: Succinate--CoA ligase [ADP-forming] subunit beta (389 aa).

Residues 9–236 form the ATP-grasp domain; the sequence is RDMFEAHGVP…KDSADPLEAK (228 aa). ATP is bound by residues K45, 52-54, A94, and E99; that span reads GRG. Residues N191 and D205 each contribute to the Mg(2+) site. Substrate is bound by residues N256 and 318 to 320; that span reads GIT.

It belongs to the succinate/malate CoA ligase beta subunit family. Heterotetramer of two alpha and two beta subunits. The cofactor is Mg(2+).

It carries out the reaction succinate + ATP + CoA = succinyl-CoA + ADP + phosphate. The enzyme catalyses GTP + succinate + CoA = succinyl-CoA + GDP + phosphate. It participates in carbohydrate metabolism; tricarboxylic acid cycle; succinate from succinyl-CoA (ligase route): step 1/1. Functionally, succinyl-CoA synthetase functions in the citric acid cycle (TCA), coupling the hydrolysis of succinyl-CoA to the synthesis of either ATP or GTP and thus represents the only step of substrate-level phosphorylation in the TCA. The beta subunit provides nucleotide specificity of the enzyme and binds the substrate succinate, while the binding sites for coenzyme A and phosphate are found in the alpha subunit. This chain is Succinate--CoA ligase [ADP-forming] subunit beta, found in Renibacterium salmoninarum (strain ATCC 33209 / DSM 20767 / JCM 11484 / NBRC 15589 / NCIMB 2235).